A 697-amino-acid chain; its full sequence is CENP-A multicopy suppressor protein 2 (697 aa).

The GATA-type; atypical zinc-finger motif lies at 351 to 378 (CQNCGTIKTANWRNATYMNITLMLCNAC). The disordered stretch occupies residues 443–484 (PLNRLTSLDSTHSAPDPNHISKPSVVNQQKSRGGPRTAKLKN). Positions 445 to 455 (NRLTSLDSTHS) are enriched in polar residues.

Interacts with CENP-A.

Its subcellular location is the nucleus. The protein localises to the chromosome. It localises to the centromere. Its function is as follows. Required for proper chromosome segregation via regulation of CENP-A localization to the centromere. The chain is CENP-A multicopy suppressor protein 2 (ams2) from Schizosaccharomyces pombe (strain 972 / ATCC 24843) (Fission yeast).